A 326-amino-acid chain; its full sequence is Biotin synthase (326 aa).

The region spanning 51-278 is the Radical SAM core domain; it reads NRVQVSRLIS…KSFVRLSAGR (228 aa). The [4Fe-4S] cluster site is built by C66, C70, and C73. The [2Fe-2S] cluster site is built by C110, C141, C201, and R273.

The protein belongs to the radical SAM superfamily. Biotin synthase family. In terms of assembly, homodimer. [4Fe-4S] cluster is required as a cofactor. The cofactor is [2Fe-2S] cluster.

The catalysed reaction is (4R,5S)-dethiobiotin + (sulfur carrier)-SH + 2 reduced [2Fe-2S]-[ferredoxin] + 2 S-adenosyl-L-methionine = (sulfur carrier)-H + biotin + 2 5'-deoxyadenosine + 2 L-methionine + 2 oxidized [2Fe-2S]-[ferredoxin]. The protein operates within cofactor biosynthesis; biotin biosynthesis; biotin from 7,8-diaminononanoate: step 2/2. Catalyzes the conversion of dethiobiotin (DTB) to biotin by the insertion of a sulfur atom into dethiobiotin via a radical-based mechanism. This Paramagnetospirillum magneticum (strain ATCC 700264 / AMB-1) (Magnetospirillum magneticum) protein is Biotin synthase.